The primary structure comprises 68 residues: Ribosome modulation factor (68 aa).

This sequence belongs to the ribosome modulation factor family.

It localises to the cytoplasm. Its function is as follows. During stationary phase, converts 70S ribosomes to an inactive dimeric form (100S ribosomes). The chain is Ribosome modulation factor from Alcanivorax borkumensis (strain ATCC 700651 / DSM 11573 / NCIMB 13689 / SK2).